The primary structure comprises 842 residues: MTQVTVKELAQEVEAPVERLLQQMREAGLPHTDAGQVVTDNEKQTLLTHLKSSHKSKAEEPRKITLQRKTTSTLRVAGSKSISVEVRKKKVFVQRSPEEIQAEQKRELDERRAAENAARDKVEAEVRQRNEEQARRQAADSAVAAPAPAAKPEPAPAAAPAPVVADAPASEDAAARAAERKKDETRRNESRTRDDDRRRGEAPRVSIKVKVKEKEKAPTPRAAPRTTDEESDGARRGRGGKGKLKKRNQHGFQNPTGPVIRDVTIGETITVSELANQMSVKGAEVVKFMFKMGTPVTINQVLDQETAQLIAEELGHKVTLVSDTALEDSLAESLKFEGQTESRAPVVTVMGHVDHGKTSLLDYIRRAKVAAGEAGGITQHIGAYHVETDRGMVTFLDTPGHAAFTQMRARGAKATDIVILVVAADDGVMPQTREAVQHAKAAGVPLVVAVNKIDKPGADLDRIRNELSVEGVTSEDWGGDTPFVKVSAKMGTGVDELLEAVLLQAEILELTATPTAPGRGVVVESRLDKGRGPVATILVQDGTLRQGDMVLCGSNYGRVRAMLDENGKPVKEAGPSIPVEILGLDGTPEAGDELSVVADEKKAREVALFRQGKYREVKLARAHAGKLENIFETMGQEEKKTLNIVLKTDVRGSLEALQGSLGGLGNDEVQVRVIGGGVGGITESDANLALASNAVLFGFNVRADAGARKIVEQEGLDMRYYNVIYDIIEDVKKALTGMLGSDVRENILGVAEVRDVFRSPKFGAIAGCMVIEGTVYRNRPIRVLRDDVVIFEGELESLRRFKDDASEVRSGMECGIGVKSYNDVKVGDKIEVFEKVQVARTL.

Residues Q94 to V259 are disordered. Residues S96–A138 show a composition bias toward basic and acidic residues. Residues A139–P148 are compositionally biased toward low complexity. The segment covering A149–A159 has biased composition (pro residues). The span at P160–D172 shows a compositional bias: low complexity. Composition is skewed to basic and acidic residues over residues A173–A202 and T226–R235. The span at R236–Q249 shows a compositional bias: basic residues. The 168-residue stretch at S342–E509 folds into the tr-type G domain. Residues G351–T358 are G1. A GTP-binding site is contributed by G351 to T358. Residues G376 to H380 are G2. The tract at residues D397–G400 is G3. GTP is bound by residues D397 to H401 and N451 to D454. The tract at residues N451–D454 is G4. Positions S487 to K489 are G5.

It belongs to the TRAFAC class translation factor GTPase superfamily. Classic translation factor GTPase family. IF-2 subfamily.

It is found in the cytoplasm. Its function is as follows. One of the essential components for the initiation of protein synthesis. Protects formylmethionyl-tRNA from spontaneous hydrolysis and promotes its binding to the 30S ribosomal subunits. Also involved in the hydrolysis of GTP during the formation of the 70S ribosomal complex. In Pseudomonas putida (strain GB-1), this protein is Translation initiation factor IF-2.